We begin with the raw amino-acid sequence, 195 residues long: Large ribosomal subunit protein uL5 (195 aa).

Belongs to the universal ribosomal protein uL5 family. As to quaternary structure, part of the 50S ribosomal subunit; part of the 5S rRNA/L5/L18/L25 subcomplex. Contacts the 5S rRNA and the P site tRNA. Forms a bridge to the 30S subunit in the 70S ribosome.

In terms of biological role, this is one of the proteins that bind and probably mediate the attachment of the 5S RNA into the large ribosomal subunit, where it forms part of the central protuberance. In the 70S ribosome it contacts protein S13 of the 30S subunit (bridge B1b), connecting the 2 subunits; this bridge is implicated in subunit movement. Contacts the P site tRNA; the 5S rRNA and some of its associated proteins might help stabilize positioning of ribosome-bound tRNAs. In Chlorobium chlorochromatii (strain CaD3), this protein is Large ribosomal subunit protein uL5.